The chain runs to 393 residues: Protein TsgA (393 aa).

A run of 12 helical transmembrane segments spans residues 11-31 (WISFLSYALTGALVIVTGMVM), 51-71 (FLNAGILISIFLNAWLMEIIP), 78-98 (FGFILMVLAVAGLMFSHSLAL), 101-121 (AAMFVLGLVSGITMSIGTFLI), 134-154 (LLFTDSFFSMAGMIFPMVAAF), 162-182 (WYWVYACIGLVYLAIFILTFG), 206-226 (IGVLFLAVAALCYILGQLGFI), 245-265 (ALVSDFWMSYMFGMWAFSFIL), 273-293 (ILTVLAGIAAVLMYLFITGTQ), 298-318 (WFILTLGFFSSAIYTSIITLG), 332-352 (FILTCGTIGTMLTFVVTGPIV), and 361-381 (LLTANGLYAVVFVMCFALGFV).

The protein belongs to the major facilitator superfamily. TsgA family.

The protein resides in the cell inner membrane. This Salmonella schwarzengrund (strain CVM19633) protein is Protein TsgA.